The primary structure comprises 144 residues: Ribosomal RNA large subunit methyltransferase H (144 aa).

S-adenosyl-L-methionine is bound by residues L63, G92, and 111–116 (LSAMTL).

Belongs to the RNA methyltransferase RlmH family. As to quaternary structure, homodimer.

The protein resides in the cytoplasm. It catalyses the reaction pseudouridine(1915) in 23S rRNA + S-adenosyl-L-methionine = N(3)-methylpseudouridine(1915) in 23S rRNA + S-adenosyl-L-homocysteine + H(+). Its function is as follows. Specifically methylates the pseudouridine at position 1915 (m3Psi1915) in 23S rRNA. This Prochlorococcus marinus (strain MIT 9313) protein is Ribosomal RNA large subunit methyltransferase H.